A 122-amino-acid chain; its full sequence is Ribosome-binding factor A (122 aa).

A compositionally biased stretch (basic and acidic residues) spans 95 to 111 (PTVERVTRIQRTLREVS). Residues 95-122 (PTVERVTRIQRTLREVSGEDGDGNGTQE) are disordered.

It belongs to the RbfA family. In terms of assembly, monomer. Binds 30S ribosomal subunits, but not 50S ribosomal subunits or 70S ribosomes.

It is found in the cytoplasm. One of several proteins that assist in the late maturation steps of the functional core of the 30S ribosomal subunit. Associates with free 30S ribosomal subunits (but not with 30S subunits that are part of 70S ribosomes or polysomes). Required for efficient processing of 16S rRNA. May interact with the 5'-terminal helix region of 16S rRNA. This chain is Ribosome-binding factor A, found in Rubrobacter xylanophilus (strain DSM 9941 / JCM 11954 / NBRC 16129 / PRD-1).